Here is a 513-residue protein sequence, read N- to C-terminus: Flagellin A (513 aa).

This sequence belongs to the bacterial flagellin family. As to quaternary structure, heteromer of FlaA and FlaB. FlaB is located proximal to the hook while the remainder of the filament is composed of the predominant FlaA.

Its subcellular location is the secreted. The protein localises to the bacterial flagellum. In terms of biological role, flagellin is the subunit protein which polymerizes to form the filaments of bacterial flagella. Important for motility and virulence. In Helicobacter felis (strain ATCC 49179 / CCUG 28539 / NCTC 12436 / CS1), this protein is Flagellin A (flaA).